The chain runs to 393 residues: MTNSNRIKLTWISFLSYALTGALVIVTGMVMGNIADYFNLPVSSMSNTFTFLNAGILISIFLNAWLMEIVPLKTQLRFGFLLMVLAVAGLMFSHSLALFSTAMFILGVVSGITMSIGTFLITQMYEGRQRGSRLLFTDSFFSMAGMIFPMIAAFLLAHSIEWYWVYACIGLVYVAIFILTFGCEFPALGKHAPKTDAPVEKEKWGIGVLFLSVAALCYILGQLGFISWVPEYAKGLGMSLNDAGTLVSNFWMSYMVGMWAFSFILRFFDLQRILTVLAGLAAILMYVFNTGTPAHMAWSILALGFFSSAIYTTIITLGSQQTKVPSPKLVNFVLTCGTIGTMLTFVVTGPIVEHSGPQAALLTANGLYAVVFVMCFLLGFVSRHRQHNTLTSH.

12 helical membrane passes run 11–31, 51–71, 78–98, 101–121, 140–160, 162–182, 206–226, 245–265, 273–293, 297–317, 332–352, and 361–381; these read WISF…GMVM, FLNA…EIVP, FGFL…SLAL, TAMF…TFLI, FFSM…AHSI, WYWV…LTFG, IGVL…LGFI, TLVS…SFIL, ILTV…TGTP, AWSI…IITL, FVLT…GPIV, and LLTA…LGFV.

Belongs to the major facilitator superfamily. TsgA family.

The protein resides in the cell inner membrane. This is Protein TsgA from Shigella boydii serotype 18 (strain CDC 3083-94 / BS512).